Reading from the N-terminus, the 209-residue chain is Leucyl/phenylalanyl-tRNA--protein transferase (209 aa).

This sequence belongs to the L/F-transferase family.

The protein resides in the cytoplasm. The catalysed reaction is N-terminal L-lysyl-[protein] + L-leucyl-tRNA(Leu) = N-terminal L-leucyl-L-lysyl-[protein] + tRNA(Leu) + H(+). It catalyses the reaction N-terminal L-arginyl-[protein] + L-leucyl-tRNA(Leu) = N-terminal L-leucyl-L-arginyl-[protein] + tRNA(Leu) + H(+). It carries out the reaction L-phenylalanyl-tRNA(Phe) + an N-terminal L-alpha-aminoacyl-[protein] = an N-terminal L-phenylalanyl-L-alpha-aminoacyl-[protein] + tRNA(Phe). In terms of biological role, functions in the N-end rule pathway of protein degradation where it conjugates Leu, Phe and, less efficiently, Met from aminoacyl-tRNAs to the N-termini of proteins containing an N-terminal arginine or lysine. In Paramagnetospirillum magneticum (strain ATCC 700264 / AMB-1) (Magnetospirillum magneticum), this protein is Leucyl/phenylalanyl-tRNA--protein transferase.